The sequence spans 307 residues: D-alanine--D-alanine ligase (307 aa).

The 194-residue stretch at 108–301 (KEVFAAAGLP…FPEFCAWLVE (194 aa)) folds into the ATP-grasp domain. 135–185 (LPPPYVVKPNAEGSSVGVYIVHEDANGPPQLAADMPQDLMVETYVPGRELT) lines the ATP pocket. Mg(2+)-binding residues include aspartate 252, glutamate 268, and asparagine 270.

The protein belongs to the D-alanine--D-alanine ligase family. The cofactor is Mg(2+). It depends on Mn(2+) as a cofactor.

Its subcellular location is the cytoplasm. It carries out the reaction 2 D-alanine + ATP = D-alanyl-D-alanine + ADP + phosphate + H(+). The protein operates within cell wall biogenesis; peptidoglycan biosynthesis. In terms of biological role, cell wall formation. In Cereibacter sphaeroides (strain ATCC 17029 / ATH 2.4.9) (Rhodobacter sphaeroides), this protein is D-alanine--D-alanine ligase.